We begin with the raw amino-acid sequence, 208 residues long: Outer-membrane lipoprotein carrier protein (208 aa).

An N-terminal signal peptide occupies residues 1 to 22; the sequence is MKNLLCAVMLTSPLLYSTAVFA.

Belongs to the LolA family. Monomer.

It is found in the periplasm. Participates in the translocation of lipoproteins from the inner membrane to the outer membrane. Only forms a complex with a lipoprotein if the residue after the N-terminal Cys is not an aspartate (The Asp acts as a targeting signal to indicate that the lipoprotein should stay in the inner membrane). This Shewanella putrefaciens (strain CN-32 / ATCC BAA-453) protein is Outer-membrane lipoprotein carrier protein.